The following is a 334-amino-acid chain: MTESLDGIKERALREIASARDTETLQSVSVKYLGRKGAVTLFLRNLSQLPAEERPRAGQAANQVKQDLQAALDRATEQIAADSAAVDGIDVSLPGRPVSRGTLHPITRITRRICEIFGRMGFDVVEGPEIETDYYNFEALNIPKHHPARDMQDTFYISDNVVLRTHTSPTQPRVMEKTAPPLRIIAPGKVYRCDSDVTHTPMFHQVEGLMVDRNVSFGDLKGILTLFIHRMFDPETSLRFRPSYFPFTEPSAEVDIRCVACRGKGCRICSHTGWLEILGAGMVHPAVFEKAGYDTQAYTGFAFGMGVERIAMLKYNIDDTRKFFENDTRFLRQF.

E249 contributes to the Mg(2+) binding site.

This sequence belongs to the class-II aminoacyl-tRNA synthetase family. Phe-tRNA synthetase alpha subunit type 1 subfamily. Tetramer of two alpha and two beta subunits. It depends on Mg(2+) as a cofactor.

The protein localises to the cytoplasm. The enzyme catalyses tRNA(Phe) + L-phenylalanine + ATP = L-phenylalanyl-tRNA(Phe) + AMP + diphosphate + H(+). In Desulfosudis oleivorans (strain DSM 6200 / JCM 39069 / Hxd3) (Desulfococcus oleovorans), this protein is Phenylalanine--tRNA ligase alpha subunit.